Here is a 473-residue protein sequence, read N- to C-terminus: Glutamate--tRNA ligase 2 (473 aa).

Positions 11 to 21 match the 'HIGH' region motif; it reads PSPTGYLHIGG. Positions 113 to 133 are enriched in basic and acidic residues; sequence KARAEGRPPRYDGRWRDRDPS. The interval 113-136 is disordered; sequence KARAEGRPPRYDGRWRDRDPSEAP. Positions 240–244 match the 'KMSKS' region motif; sequence KLSKR. Lys243 provides a ligand contact to ATP.

It belongs to the class-I aminoacyl-tRNA synthetase family. Glutamate--tRNA ligase type 1 subfamily. In terms of assembly, monomer.

Its subcellular location is the cytoplasm. The catalysed reaction is tRNA(Glu) + L-glutamate + ATP = L-glutamyl-tRNA(Glu) + AMP + diphosphate. In terms of biological role, catalyzes the attachment of glutamate to tRNA(Glu) in a two-step reaction: glutamate is first activated by ATP to form Glu-AMP and then transferred to the acceptor end of tRNA(Glu). The chain is Glutamate--tRNA ligase 2 from Brucella suis biovar 1 (strain 1330).